The chain runs to 834 residues: DNA polymerase I, thermostable (834 aa).

A 5'-3' exonuclease domain is found at 176–262; it reads KPEQWVDFRA…DLPLEVDLAQ (87 aa). The interval 412–834 is polymerase; sequence ERLHRNLLKR…MGEDWLSAKG (423 aa).

The protein belongs to the DNA polymerase type-A family.

It carries out the reaction DNA(n) + a 2'-deoxyribonucleoside 5'-triphosphate = DNA(n+1) + diphosphate. Its function is as follows. Has 5'-3' exonuclease activity and no 3'-5' exonuclease activity. This is DNA polymerase I, thermostable (polA) from Thermus caldophilus.